The sequence spans 2498 residues: PKS-NRPS hybrid synthetase acdB (2498 aa).

Residues 34 to 427 (FEQAAHAHFD…GRADSQVKIR (394 aa)) form an adenylation (A) domain region. One can recognise a Carrier 1 domain in the interval 531–606 (QPATELERDI…SLAGYLMDMD (76 aa)). Residue S566 is modified to O-(pantetheine 4'-phosphoryl)serine. Residues 627–1058 (SDDIAVVSMA…GTNAHVIVEE (432 aa)) enclose the Ketosynthase family 3 (KS3) domain. Residues C802, H938, and H979 each act as for beta-ketoacyl synthase activity in the active site. The segment at 1165–1485 (LFAGQGSQQL…EILARLHVQH (321 aa)) is malonyl-CoA:ACP transacylase (MAT) domain. The interval 1739-1917 (GAVLITGGLS…PAVCVAYGPL (179 aa)) is ketoreductase (KR) domain. A Carrier 2 domain is found at 2017–2092 (EILLRTIQEA…ELSRYLLPQL (76 aa)). S2052 carries the O-(pantetheine 4'-phosphoryl)serine modification. The interval 2149–2378 (VTGATEFVGA…FPVDYVCRTI (230 aa)) is thioester reductase (TE) domain.

In the C-terminal section; belongs to the NRP synthetase family. It depends on pantetheine 4'-phosphate as a cofactor.

It functions in the pathway secondary metabolite biosynthesis. Its function is as follows. PKS-NRPS hybrid synthetase; part of the gene cluster that mediates the biosynthesis of aspcandine, a pyrrolobenzazepine alkaloid. Initially, the indoleamine 2,3-dioxygenase acdA accepts L-tryptophan and performs the oxidative opening of the indole ring to yield N'-formyl-L-kynurenine, which undergoes the spontaneous deformylation reaction to provide L-kynurenine. The kynurenine 3-monooxygenase acdD then hydroxylates L-kynurenine to afford 3-hydroxy-L-kynurenine. 3-hydroxy-L-kynurenine is activated by the A domain of the NRPS-PKS acdB and subsequently loaded onto the enzyme. The KS domain conducts the decarboxylative condensation of the 3-hydroxy-L-kynurenyl and malonyl moieties, and subsequent nucleophilic attacks by the two amino groups would occur nonenzymatically at two distinct positions, achieving the chain release and the construction of the tricyclic system. Finally, a dehydration reaction completes the biosynthesis to yield aspcandine. The sequence is that of PKS-NRPS hybrid synthetase acdB from Aspergillus candidus.